We begin with the raw amino-acid sequence, 266 residues long: 4-hydroxy-tetrahydrodipicolinate reductase (266 aa).

NAD(+)-binding positions include 7–12, E33, 96–98, and 120–123; these read GTIGRM, GTT, and APNM. The active-site Proton donor/acceptor is H153. A (S)-2,3,4,5-tetrahydrodipicolinate-binding site is contributed by H154. K157 (proton donor) is an active-site residue. 163–164 is a binding site for (S)-2,3,4,5-tetrahydrodipicolinate; that stretch reads GT.

It belongs to the DapB family.

The protein localises to the cytoplasm. It carries out the reaction (S)-2,3,4,5-tetrahydrodipicolinate + NAD(+) + H2O = (2S,4S)-4-hydroxy-2,3,4,5-tetrahydrodipicolinate + NADH + H(+). The catalysed reaction is (S)-2,3,4,5-tetrahydrodipicolinate + NADP(+) + H2O = (2S,4S)-4-hydroxy-2,3,4,5-tetrahydrodipicolinate + NADPH + H(+). It functions in the pathway amino-acid biosynthesis; L-lysine biosynthesis via DAP pathway; (S)-tetrahydrodipicolinate from L-aspartate: step 4/4. In terms of biological role, catalyzes the conversion of 4-hydroxy-tetrahydrodipicolinate (HTPA) to tetrahydrodipicolinate. The chain is 4-hydroxy-tetrahydrodipicolinate reductase from Polynucleobacter necessarius subsp. necessarius (strain STIR1).